The sequence spans 142 residues: MKTFSAKAHEVTREWYVIDATDKVLGRVASEVARRLRGKHKPEFTPHVDTGDFIIVINASKLKVTGNKTLDKKYYRHSGYPGGIYETTFGKMQERFPGRALEKAVKGMLPKGPLGYAMIKKLKVYAEATHPHSAQQPKALEI.

It belongs to the universal ribosomal protein uL13 family. As to quaternary structure, part of the 50S ribosomal subunit.

Functionally, this protein is one of the early assembly proteins of the 50S ribosomal subunit, although it is not seen to bind rRNA by itself. It is important during the early stages of 50S assembly. The protein is Large ribosomal subunit protein uL13 of Burkholderia pseudomallei (strain 1106a).